A 380-amino-acid chain; its full sequence is uncharacterized protein (380 aa).

This is an uncharacterized protein from Sinorhizobium fredii (strain NBRC 101917 / NGR234).